The following is a 382-amino-acid chain: 8-amino-7-oxononanoate synthase (382 aa).

Arg26 serves as a coordination point for substrate. 104-105 (GY) is a pyridoxal 5'-phosphate binding site. His129 is a substrate binding site. Pyridoxal 5'-phosphate-binding positions include Ser175, 200 to 203 (DEAH), and 232 to 235 (TLSK). At Lys235 the chain carries N6-(pyridoxal phosphate)lysine. Thr345 provides a ligand contact to substrate.

The protein belongs to the class-II pyridoxal-phosphate-dependent aminotransferase family. BioF subfamily. In terms of assembly, homodimer. Requires pyridoxal 5'-phosphate as cofactor.

It catalyses the reaction 6-carboxyhexanoyl-[ACP] + L-alanine + H(+) = (8S)-8-amino-7-oxononanoate + holo-[ACP] + CO2. It functions in the pathway cofactor biosynthesis; biotin biosynthesis. In terms of biological role, catalyzes the decarboxylative condensation of pimeloyl-[acyl-carrier protein] and L-alanine to produce 8-amino-7-oxononanoate (AON), [acyl-carrier protein], and carbon dioxide. This Mycobacterium sp. (strain KMS) protein is 8-amino-7-oxononanoate synthase.